A 438-amino-acid polypeptide reads, in one-letter code: tRNA wybutosine-synthesizing protein 2 homolog (438 aa).

S-adenosyl-L-methionine is bound by residues Ser209, Lys216, Glu256, and 284–285 (DN).

Belongs to the class I-like SAM-binding methyltransferase superfamily. TRM5/TYW2 family.

The catalysed reaction is 4-demethylwyosine(37) in tRNA(Phe) + S-adenosyl-L-methionine = 4-demethyl-7-[(3S)-3-amino-3-carboxypropyl]wyosine(37) in tRNA(Phe) + S-methyl-5'-thioadenosine + H(+). It functions in the pathway tRNA modification; wybutosine-tRNA(Phe) biosynthesis. Functionally, S-adenosyl-L-methionine-dependent transferase that acts as a component of the wybutosine biosynthesis pathway. Wybutosine is a hyper modified guanosine with a tricyclic base found at the 3'-position adjacent to the anticodon of eukaryotic phenylalanine tRNA. Catalyzes the transfer of the alpha-amino-alpha-carboxypropyl (acp) group from S-adenosyl-L-methionine to the C-7 position of 4-demethylwyosine (imG-14) to produce wybutosine-86. The polypeptide is tRNA wybutosine-synthesizing protein 2 homolog (TRMT12) (Bos taurus (Bovine)).